We begin with the raw amino-acid sequence, 680 residues long: Anosmin-1 (680 aa).

Positions 1 to 24 are cleaved as a signal peptide; that stretch reads MVPGVPGAVLTLCLWLAASSGCLA. Intrachain disulfides connect cysteine 49–cysteine 83, cysteine 53–cysteine 77, cysteine 86–cysteine 105, cysteine 90–cysteine 101, and cysteine 116–cysteine 120. Asparagine 71 is a glycosylation site (N-linked (GlcNAc...) asparagine). One can recognise a WAP domain in the interval 127–176; that stretch reads LLVKQGDCPAPEKASGFAAACVESCEVDNECSGVKKCCSNGCGHTCQVPK. 4 consecutive Fibronectin type-III domains span residues 186–287, 292–400, 425–523, and 550–658; these read PRKE…SKDP, APAN…THAT, PTRP…TPPC, and KPEN…LPPS. Residues asparagine 209, asparagine 300, asparagine 470, asparagine 553, and asparagine 564 are each glycosylated (N-linked (GlcNAc...) asparagine). The tract at residues 642 to 680 is disordered; sequence EGPATIKTFRTPELPPSSAHRSHLKHRHPHHYKPSPERY. A compositionally biased stretch (basic residues) spans 661 to 674; it reads HRSHLKHRHPHHYK.

In terms of assembly, interacts with FGFR1; this interaction does not interfere with FGF2-binding to FGFR1. Binds heparin. Heparin may promote or interfere with ANOS1-FGFR1-FGF2 complex formation depending on the sequential order of its binding to the various constituents. For instance, heparin-ANOS1 interaction favors subsequent binding to pre-existing binary FGFR1-FGF2 complex, while heparin-FGF2 complex does not interact with ANOS1-FGFR1. Post-translationally, N-glycosylated. In terms of processing, may be proteolytically cleaved at the cell surface and released from the cell surface. Expressed in the cerebellum (at protein level).

The protein resides in the cell membrane. It is found in the secreted. Functionally, has a dual branch-promoting and guidance activity, which may play an important role in the patterning of mitral and tufted cell collaterals to the olfactory cortex. Chemoattractant for fetal olfactory epithelial cells. In Homo sapiens (Human), this protein is Anosmin-1.